Reading from the N-terminus, the 322-residue chain is Solute carrier family 35 member B1 (322 aa).

A run of 8 helical transmembrane segments spans residues 12–32 (LRLP…GILQ), 51–71 (FALT…KILI), 85–105 (WLYA…NSAL), 136–156 (YPMA…LFMY), 168–188 (TIGY…LTGV), 210–230 (LWST…WEFL), 243–263 (ILLF…TVVY), and 285–305 (VILF…LVFL). Residues 318 to 322 (KKTSH) carry the Di-lysine motif motif.

It belongs to the nucleotide-sugar transporter family. SLC35B subfamily.

It is found in the endoplasmic reticulum membrane. It catalyses the reaction ADP(in) + ATP(out) = ADP(out) + ATP(in). It carries out the reaction UDP(out) + ATP(in) = UDP(in) + ATP(out). The enzyme catalyses UTP(out) + ATP(in) = UTP(in) + ATP(out). The catalysed reaction is dATP(out) + ATP(in) = dATP(in) + ATP(out). Its function is as follows. ATP:ADP antiporter that catalyzes the exchange of ATP and ADP across the endoplasmic reticulum (ER) membrane. Imports ATP from the cytosol to the ER lumen and exports ADP in the opposite direction. Regulates ER energy metabolism and protein biogenesis. Appears to be part of a calcium-dependent ER to cytosol low energy response axis, where calcium efflux from ER to the cytosol triggers ATP import into the ER lumen to maintain sufficient ATP supply. Provides ATP to ER chaperone HSPA5 that drives protein folding and trafficking in the ER. Can transport dATP, UTP or UDP in exchange for ATP, but the physiological relevance of this process remains to be established. This Bos taurus (Bovine) protein is Solute carrier family 35 member B1 (SLC35B1).